We begin with the raw amino-acid sequence, 290 residues long: UPF0761 membrane protein YihY (290 aa).

At Met-1–Ser-43 the chain is on the cytoplasmic side. A helical transmembrane segment spans residues Leu-44 to Phe-64. At Ser-65–Ala-103 the chain is on the periplasmic side. The helical transmembrane segment at Val-104 to Leu-124 threads the bilayer. Over Asn-125–Ser-139 the chain is Cytoplasmic. A helical membrane pass occupies residues Phe-140–Ile-160. The Periplasmic portion of the chain corresponds to Ser-161–Asn-179. A helical transmembrane segment spans residues Val-180 to Val-200. The Cytoplasmic portion of the chain corresponds to Pro-201–Asp-209. Residues Ala-210 to Leu-230 form a helical membrane-spanning segment. Residues Tyr-231–Gly-243 lie on the Periplasmic side of the membrane. A helical membrane pass occupies residues Val-244–Leu-264. The Cytoplasmic segment spans residues Gly-265–Pro-290.

This sequence belongs to the UPF0761 family.

It localises to the cell inner membrane. This is UPF0761 membrane protein YihY from Salmonella typhimurium (strain LT2 / SGSC1412 / ATCC 700720).